The following is a 253-amino-acid chain: Ubiquinone/menaquinone biosynthesis C-methyltransferase UbiE (253 aa).

S-adenosyl-L-methionine contacts are provided by residues Thr76, Asp97, and 125-126; that span reads NA.

Belongs to the class I-like SAM-binding methyltransferase superfamily. MenG/UbiE family.

It carries out the reaction a 2-demethylmenaquinol + S-adenosyl-L-methionine = a menaquinol + S-adenosyl-L-homocysteine + H(+). The catalysed reaction is a 2-methoxy-6-(all-trans-polyprenyl)benzene-1,4-diol + S-adenosyl-L-methionine = a 5-methoxy-2-methyl-3-(all-trans-polyprenyl)benzene-1,4-diol + S-adenosyl-L-homocysteine + H(+). It participates in quinol/quinone metabolism; menaquinone biosynthesis; menaquinol from 1,4-dihydroxy-2-naphthoate: step 2/2. The protein operates within cofactor biosynthesis; ubiquinone biosynthesis. Methyltransferase required for the conversion of demethylmenaquinol (DMKH2) to menaquinol (MKH2) and the conversion of 2-polyprenyl-6-methoxy-1,4-benzoquinol (DDMQH2) to 2-polyprenyl-3-methyl-6-methoxy-1,4-benzoquinol (DMQH2). In Rhodopseudomonas palustris (strain ATCC BAA-98 / CGA009), this protein is Ubiquinone/menaquinone biosynthesis C-methyltransferase UbiE.